Reading from the N-terminus, the 421-residue chain is Acyl-coenzyme A thioesterase 1 (421 aa).

Catalysis depends on charge relay system residues Ser232, Asp326, and His360.

Belongs to the C/M/P thioester hydrolase family. As to quaternary structure, monomer.

The protein resides in the cytoplasm. The protein localises to the cytosol. The catalysed reaction is hexadecanoyl-CoA + H2O = hexadecanoate + CoA + H(+). It catalyses the reaction decanoyl-CoA + H2O = decanoate + CoA + H(+). It carries out the reaction dodecanoyl-CoA + H2O = dodecanoate + CoA + H(+). The enzyme catalyses tetradecanoyl-CoA + H2O = tetradecanoate + CoA + H(+). The catalysed reaction is octadecanoyl-CoA + H2O = octadecanoate + CoA + H(+). It catalyses the reaction eicosanoyl-CoA + H2O = eicosanoate + CoA + H(+). It carries out the reaction (9Z)-octadecenoyl-CoA + H2O = (9Z)-octadecenoate + CoA + H(+). The enzyme catalyses (9Z)-hexadecenoyl-CoA + H2O = (9Z)-hexadecenoate + CoA + H(+). The catalysed reaction is (9E)-octadecenoyl-CoA + H2O = (9E)-octadecenoate + CoA + H(+). Its pathway is lipid metabolism; fatty acid metabolism. Catalyzes the hydrolysis of acyl-CoAs into free fatty acids and coenzyme A (CoASH), regulating their respective intracellular levels. More active towards saturated and unsaturated long chain fatty acyl-CoAs (C12-C20). This is Acyl-coenzyme A thioesterase 1 (ACOT1) from Homo sapiens (Human).